Here is a 335-residue protein sequence, read N- to C-terminus: Urokinase plasminogen activator surface receptor (335 aa).

Residues 1–22 form the signal peptide; sequence MGHPPLLPLLLLLHTCVPASWG. UPAR/Ly6 domains are found at residues 23–114, 115–213, and 214–305; these read LRCM…RSRY, LECI…PQNG, and RQCY…YRSG. 3 disulfides stabilise this stretch: Cys25–Cys46, Cys28–Cys34, and Cys39–Cys67. Asn74 is a glycosylation site (N-linked (GlcNAc...) asparagine). Intrachain disulfides connect Cys93/Cys98, Cys117/Cys144, Cys120/Cys127, Cys137/Cys169, Cys175/Cys192, Cys193/Cys198, Cys216/Cys244, Cys219/Cys227, Cys237/Cys263, Cys269/Cys287, and Cys288/Cys293. N-linked (GlcNAc...) asparagine glycans are attached at residues Asn184, Asn194, Asn222, and Asn255. A lipid anchor (GPI-anchor amidated glycine) is attached at Gly305. Positions 306–335 are cleaved as a propeptide — removed in mature form; it reads AAPQPGPAHLSLTITLLMTARLWGGTLLWT.

As to quaternary structure, monomer. Interacts with MRC2. Interacts (via the UPAR/Ly6 domains) with SRPX2. Interacts with FAP (seprase); the interaction occurs at the cell surface of invadopodia membrane. Interacts with SORL1 (via N-terminal ectodomain); this interaction decreases PLAUR internalization. The ternary complex composed of PLAUR-PLAU-SERPINE1 also interacts with SORL1. Interacts with CD82; this interaction prevents PLAUR from binding to its high affinity ligand PLAU. In terms of tissue distribution, expressed in neurons of the rolandic area of the brain (at protein level). Expressed in the brain.

It is found in the cell membrane. It localises to the cell projection. The protein localises to the invadopodium membrane. Its subcellular location is the secreted. Acts as a receptor for urokinase plasminogen activator. Plays a role in localizing and promoting plasmin formation. Mediates the proteolysis-independent signal transduction activation effects of U-PA. It is subject to negative-feedback regulation by U-PA which cleaves it into an inactive form. The protein is Urokinase plasminogen activator surface receptor (PLAUR) of Homo sapiens (Human).